The primary structure comprises 393 residues: S-adenosylmethionine synthase 1 (393 aa).

Glutamate 9 contacts Mg(2+). Histidine 15 contributes to the ATP binding site. Glutamate 43 serves as a coordination point for K(+). 2 residues coordinate L-methionine: glutamate 56 and glutamine 99. ATP contacts are provided by residues 167 to 169 (DGK), 235 to 238 (SGRF), aspartate 246, 252 to 253 (RK), alanine 269, lysine 273, and lysine 277. Position 246 (aspartate 246) interacts with L-methionine. Position 277 (lysine 277) interacts with L-methionine.

It belongs to the AdoMet synthase family. As to quaternary structure, homotetramer. The cofactor is Mn(2+). Mg(2+) is required as a cofactor. Co(2+) serves as cofactor. It depends on K(+) as a cofactor.

It localises to the cytoplasm. It carries out the reaction L-methionine + ATP + H2O = S-adenosyl-L-methionine + phosphate + diphosphate. It functions in the pathway amino-acid biosynthesis; S-adenosyl-L-methionine biosynthesis; S-adenosyl-L-methionine from L-methionine: step 1/1. In terms of biological role, catalyzes the formation of S-adenosylmethionine from methionine and ATP. The reaction comprises two steps that are both catalyzed by the same enzyme: formation of S-adenosylmethionine (AdoMet) and triphosphate, and subsequent hydrolysis of the triphosphate. The polypeptide is S-adenosylmethionine synthase 1 (METK1) (Solanum tuberosum (Potato)).